A 254-amino-acid chain; its full sequence is Triosephosphate isomerase (254 aa).

A substrate-binding site is contributed by N10–K12. H96 (electrophile) is an active-site residue. E168 acts as the Proton acceptor in catalysis. Substrate-binding positions include G174, S214, and G235–G236.

It belongs to the triosephosphate isomerase family. In terms of assembly, homodimer.

It is found in the cytoplasm. The catalysed reaction is D-glyceraldehyde 3-phosphate = dihydroxyacetone phosphate. It functions in the pathway carbohydrate biosynthesis; gluconeogenesis. It participates in carbohydrate degradation; glycolysis; D-glyceraldehyde 3-phosphate from glycerone phosphate: step 1/1. Its function is as follows. Involved in the gluconeogenesis. Catalyzes stereospecifically the conversion of dihydroxyacetone phosphate (DHAP) to D-glyceraldehyde-3-phosphate (G3P). This Rhodopirellula baltica (strain DSM 10527 / NCIMB 13988 / SH1) protein is Triosephosphate isomerase.